The primary structure comprises 266 residues: 5'-nucleotidase SurE (266 aa).

4 residues coordinate a divalent metal cation: aspartate 8, aspartate 9, serine 39, and asparagine 93.

This sequence belongs to the SurE nucleotidase family. It depends on a divalent metal cation as a cofactor.

It localises to the cytoplasm. It carries out the reaction a ribonucleoside 5'-phosphate + H2O = a ribonucleoside + phosphate. Functionally, nucleotidase that shows phosphatase activity on nucleoside 5'-monophosphates. The protein is 5'-nucleotidase SurE of Pyrobaculum arsenaticum (strain DSM 13514 / JCM 11321 / PZ6).